We begin with the raw amino-acid sequence, 561 residues long: Protein NRT1/ PTR FAMILY 5.13 (561 aa).

Residues 78 to 98 form a helical membrane-spanning segment; it reads AWSGISTILPLLGAFVADAFL. Thr103 is subject to Phosphothreonine. 10 helical membrane passes run 104–124, 133–153, 183–203, 211–231, 324–344, 361–381, 405–425, 447–467, 486–506, and 530–550; these read IIIA…SAFL, SSPS…VAIG, FFNW…LVVV, WALG…LFVL, IPVW…MTFF, IPPA…VPIY, IGTG…VESK, IWWL…TLVG, AIYL…IYLI, and YFYW…LFIS.

It belongs to the major facilitator superfamily. Proton-dependent oligopeptide transporter (POT/PTR) (TC 2.A.17) family. As to expression, expressed in roots, flowers and siliques. Detected in stems and leaves.

It localises to the membrane. The sequence is that of Protein NRT1/ PTR FAMILY 5.13 (NPF5.13) from Arabidopsis thaliana (Mouse-ear cress).